Reading from the N-terminus, the 254-residue chain is MNTNTPAHPPEGAPLSEATQAALASAEHAPDSPGATHIRSFVHRRGHITQRQRDALEQLMGKWSVPYAPRPLDMAAAFGRQAPTILEIGFGMGETTEKIALARPGDNFLGVEVFNAGVGSLLHRIEESAISNLRIVQHDAVEVVRDMIAPDSLAGVHVYFPDPWPKKRHHKRRLLQPPFVALLASRLAPGGYLHCATDWEDYAVQMLEVLGGEPLLRNTADGYAPRPDFRPQTKFETRGLRLGHGVWDLMFKRA.

The disordered stretch occupies residues 1 to 34 (MNTNTPAHPPEGAPLSEATQAALASAEHAPDSPG). S-adenosyl-L-methionine-binding residues include Glu87, Glu112, Asp139, and Asp162. Residue Asp162 is part of the active site. Residues Lys166, Asp198, and 233 to 236 (TKFE) each bind substrate.

Belongs to the class I-like SAM-binding methyltransferase superfamily. TrmB family.

It carries out the reaction guanosine(46) in tRNA + S-adenosyl-L-methionine = N(7)-methylguanosine(46) in tRNA + S-adenosyl-L-homocysteine. It functions in the pathway tRNA modification; N(7)-methylguanine-tRNA biosynthesis. Functionally, catalyzes the formation of N(7)-methylguanine at position 46 (m7G46) in tRNA. The sequence is that of tRNA (guanine-N(7)-)-methyltransferase from Bordetella pertussis (strain Tohama I / ATCC BAA-589 / NCTC 13251).